The primary structure comprises 364 residues: RNA polymerase II holoenzyme cyclin-like subunit (364 aa).

The Cyclin N-terminal domain maps to 53–143; the sequence is QQINRLSKRI…VGECEFSLIS (91 aa). The tract at residues 268-303 is disordered; that stretch reads PGFGSQGSQQQAGFSQGNSQGSLQGDSAAAEPKKVT. Over residues 273–289 the composition is skewed to low complexity; it reads QGSQQQAGFSQGNSQGS.

The protein belongs to the cyclin family. Cyclin C subfamily. In terms of assembly, component of the SRB8-11 complex, a regulatory module of the Mediator complex.

The protein localises to the nucleus. Functionally, component of the SRB8-11 complex. The SRB8-11 complex is a regulatory module of the Mediator complex which is itself involved in regulation of basal and activated RNA polymerase II-dependent transcription. The SRB8-11 complex may be involved in the transcriptional repression of a subset of genes regulated by Mediator. It may inhibit the association of the Mediator complex with RNA polymerase II to form the holoenzyme complex. The SRB8-11 complex phosphorylates the C-terminal domain (CTD) of the largest subunit of RNA polymerase II. This is RNA polymerase II holoenzyme cyclin-like subunit (SSN8) from Chaetomium globosum (strain ATCC 6205 / CBS 148.51 / DSM 1962 / NBRC 6347 / NRRL 1970) (Soil fungus).